An 85-amino-acid chain; its full sequence is Large ribosomal subunit protein bL27 (85 aa).

Residues 1–22 are disordered; the sequence is MAHKKAAGSTRNGRDSESKRLG.

It belongs to the bacterial ribosomal protein bL27 family.

The chain is Large ribosomal subunit protein bL27 from Pseudoalteromonas translucida (strain TAC 125).